Here is a 206-residue protein sequence, read N- to C-terminus: High frequency lysogenization protein HflD homolog (206 aa).

Belongs to the HflD family.

It is found in the cytoplasm. The protein localises to the cell inner membrane. This is High frequency lysogenization protein HflD homolog from Pseudomonas syringae pv. tomato (strain ATCC BAA-871 / DC3000).